Here is a 352-residue protein sequence, read N- to C-terminus: Molybdenum import ATP-binding protein ModC (352 aa).

In terms of domain architecture, ABC transporter spans 1–229 (MLELNFSQTL…SVMHPWLPKE (229 aa)). 31-38 (GVSGAGKT) lines the ATP pocket. Positions 289-352 (QTSIRNVLRA…AQVKSVSITA (64 aa)) constitute a Mop domain.

Belongs to the ABC transporter superfamily. Molybdate importer (TC 3.A.1.8) family. In terms of assembly, the complex is composed of two ATP-binding proteins (ModC), two transmembrane proteins (ModB) and a solute-binding protein (ModA).

It is found in the cell inner membrane. The enzyme catalyses molybdate(out) + ATP + H2O = molybdate(in) + ADP + phosphate + H(+). Part of the ABC transporter complex ModABC involved in molybdenum import. Responsible for energy coupling to the transport system. The sequence is that of Molybdenum import ATP-binding protein ModC from Salmonella paratyphi A (strain ATCC 9150 / SARB42).